Reading from the N-terminus, the 304-residue chain is uncharacterized protein (304 aa).

Positions 226–244 (SRNSESSRQSNLNSPNDSV) are enriched in polar residues. The disordered stretch occupies residues 226-263 (SRNSESSRQSNLNSPNDSVKFNEFNKSNKSTKTNPNNI). The segment covering 246–262 (FNEFNKSNKSTKTNPNN) has biased composition (low complexity).

This is an uncharacterized protein from Acanthamoeba polyphaga (Amoeba).